The following is a 607-amino-acid chain: Pescadillo homolog (607 aa).

Residues 301–341 (ANVVEQSEKTTEDADEEPETEENLDEFKPADGADNEDSKSL) form a disordered region. Residues 313 to 324 (DADEEPETEENL) show a composition bias toward acidic residues. The span at 325–339 (DEFKPADGADNEDSK) shows a compositional bias: basic and acidic residues. Residues 348–441 (SNTSLFSNFT…ILERTDLYAC (94 aa)) form the BRCT domain. Residues 497–604 (ENVEQIDDAE…RDIEKRKKLK (108 aa)) adopt a coiled-coil conformation. A disordered region spans residues 531–607 (QNSKSAKKTK…EKRKKLKVEN (77 aa)). Basic and acidic residues-rich tracts occupy residues 544 to 561 (RDTLTAEEKEEKEAKELS) and 595 to 607 (RDIEKRKKLKVEN).

The protein belongs to the pescadillo family. In terms of assembly, component of the NOP7 complex, composed of erb1/SPBC4F6.13c, ppp1/SPBC19F5.05c and ytm1/SPAC890.04c. Within the NOP7 complex erb1/SPBC4F6.13c appears to interact directly with ppp1/SPBC19F5.05c and ytm1/SPAC890.04c. The NOP7 complex also associates with the 66S pre-ribosome.

The protein localises to the nucleus. Its subcellular location is the nucleoplasm. It is found in the nucleolus. Functionally, component of the NOP7 complex, which is required for maturation of the 25S and 5.8S ribosomal RNAs and formation of the 60S ribosome. The chain is Pescadillo homolog (ppp1) from Schizosaccharomyces pombe (strain 972 / ATCC 24843) (Fission yeast).